A 143-amino-acid chain; its full sequence is Transcription antitermination protein NusB (143 aa).

The protein belongs to the NusB family.

Involved in transcription antitermination. Required for transcription of ribosomal RNA (rRNA) genes. Binds specifically to the boxA antiterminator sequence of the ribosomal RNA (rrn) operons. This Buchnera aphidicola subsp. Acyrthosiphon pisum (strain 5A) protein is Transcription antitermination protein NusB.